A 220-amino-acid polypeptide reads, in one-letter code: Urease accessory protein UreE (220 aa).

Positions 145–220 are disordered; that stretch reads EGGAYSAGGH…QIHKRRPDNL (76 aa). The segment covering 156 to 177 has biased composition (basic and acidic residues); sequence HGHDHGSHEHSAHDHGKHDHAP. A compositionally biased stretch (low complexity) spans 178 to 188; the sequence is AKPATAATPAA. Residues 191 to 206 show a composition bias toward basic and acidic residues; it reads HGPDCNHGHDHAHEAK.

The protein belongs to the UreE family.

The protein localises to the cytoplasm. Involved in urease metallocenter assembly. Binds nickel. Probably functions as a nickel donor during metallocenter assembly. The chain is Urease accessory protein UreE from Polaromonas sp. (strain JS666 / ATCC BAA-500).